We begin with the raw amino-acid sequence, 505 residues long: Acetylcholine receptor subunit beta (505 aa).

Residues 1-24 (MTPGALLLLLLGVLGAHLAPGARG) form the signal peptide. Over 25–245 (SEAEGRLREK…VTFYLIIRRK (221 aa)) the chain is Extracellular. A disulfide bridge links C152 with C166. N165 carries an N-linked (GlcNAc...) asparagine glycan. Transmembrane regions (helical) follow at residues 246-270 (PLFYLVNVIAPCILITLLAIFVFYL), 278-295 (MGLSIFALLTLTVFLLLL), and 312-333 (YLMFTMVLVTFSVILSVVVLNL). Over 334 to 473 (HHRSPHTHQM…WQFVAMVVDR (140 aa)) the chain is Cytoplasmic. The interval 365 to 391 (KPERDQMQEPPSIAPRDSPGSGWGRGT) is disordered. Y394 is subject to Phosphotyrosine; by Tyr-kinases. A helical membrane pass occupies residues 474–492 (LFLWTFIIFTSVGTLVIFL).

Belongs to the ligand-gated ion channel (TC 1.A.9) family. Acetylcholine receptor (TC 1.A.9.1) subfamily. Beta-1/CHRNB1 sub-subfamily. Pentamer of two alpha chains, and one each of the beta, delta, and gamma (in immature muscle) or epsilon (in mature muscle) chains. The muscle heteropentamer composed of alpha-1, beta-1, delta, epsilon subunits interacts with the alpha-conotoxin ImII.

It localises to the postsynaptic cell membrane. Its subcellular location is the cell membrane. It catalyses the reaction K(+)(in) = K(+)(out). It carries out the reaction Na(+)(in) = Na(+)(out). After binding acetylcholine, the AChR responds by an extensive change in conformation that affects all subunits and leads to opening of an ion-conducting channel across the plasma membrane. The polypeptide is Acetylcholine receptor subunit beta (CHRNB1) (Bos taurus (Bovine)).